We begin with the raw amino-acid sequence, 398 residues long: 1-deoxy-D-xylulose 5-phosphate reductoisomerase (398 aa).

Thr-21, Gly-22, Ser-23, Ile-24, Gly-47, Asn-50, and Asn-127 together coordinate NADPH. A 1-deoxy-D-xylulose 5-phosphate-binding site is contributed by Lys-128. Residue Glu-129 participates in NADPH binding. Asp-151 contacts Mn(2+). Positions 152, 153, 177, and 200 each coordinate 1-deoxy-D-xylulose 5-phosphate. Glu-153 lines the Mn(2+) pocket. Gly-206 contributes to the NADPH binding site. 1-deoxy-D-xylulose 5-phosphate contacts are provided by Ser-213, Asn-218, Lys-219, and Glu-222. Glu-222 lines the Mn(2+) pocket.

It belongs to the DXR family. Requires Mg(2+) as cofactor. It depends on Mn(2+) as a cofactor.

The enzyme catalyses 2-C-methyl-D-erythritol 4-phosphate + NADP(+) = 1-deoxy-D-xylulose 5-phosphate + NADPH + H(+). It participates in isoprenoid biosynthesis; isopentenyl diphosphate biosynthesis via DXP pathway; isopentenyl diphosphate from 1-deoxy-D-xylulose 5-phosphate: step 1/6. Functionally, catalyzes the NADPH-dependent rearrangement and reduction of 1-deoxy-D-xylulose-5-phosphate (DXP) to 2-C-methyl-D-erythritol 4-phosphate (MEP). The chain is 1-deoxy-D-xylulose 5-phosphate reductoisomerase from Mycolicibacterium smegmatis (strain ATCC 700084 / mc(2)155) (Mycobacterium smegmatis).